Here is a 446-residue protein sequence, read N- to C-terminus: Histidine--tRNA ligase (446 aa).

Residues 403-422 (TASVKPLRGTGDDGEKSVQQ) form a disordered region.

Belongs to the class-II aminoacyl-tRNA synthetase family. Homodimer.

It localises to the cytoplasm. The catalysed reaction is tRNA(His) + L-histidine + ATP = L-histidyl-tRNA(His) + AMP + diphosphate + H(+). This is Histidine--tRNA ligase from Burkholderia thailandensis (strain ATCC 700388 / DSM 13276 / CCUG 48851 / CIP 106301 / E264).